Consider the following 382-residue polypeptide: UDP-4-amino-4-deoxy-L-arabinose--oxoglutarate aminotransferase (382 aa).

N6-(pyridoxal phosphate)lysine is present on Lys183.

Belongs to the DegT/DnrJ/EryC1 family. ArnB subfamily. As to quaternary structure, homodimer. Pyridoxal 5'-phosphate is required as a cofactor.

It carries out the reaction UDP-4-amino-4-deoxy-beta-L-arabinose + 2-oxoglutarate = UDP-beta-L-threo-pentopyranos-4-ulose + L-glutamate. It functions in the pathway nucleotide-sugar biosynthesis; UDP-4-deoxy-4-formamido-beta-L-arabinose biosynthesis; UDP-4-deoxy-4-formamido-beta-L-arabinose from UDP-alpha-D-glucuronate: step 2/3. It participates in bacterial outer membrane biogenesis; lipopolysaccharide biosynthesis. In terms of biological role, catalyzes the conversion of UDP-4-keto-arabinose (UDP-Ara4O) to UDP-4-amino-4-deoxy-L-arabinose (UDP-L-Ara4N). The modified arabinose is attached to lipid A and is required for resistance to polymyxin and cationic antimicrobial peptides. In Pseudomonas aeruginosa (strain UCBPP-PA14), this protein is UDP-4-amino-4-deoxy-L-arabinose--oxoglutarate aminotransferase.